The chain runs to 378 residues: Cytochrome b (378 aa).

The next 4 helical transmembrane spans lie at 34 to 54, 78 to 99, 114 to 134, and 179 to 199; these read FGSL…FLAM, WLLR…YLHV, WLIG…GYVL, and FFTF…IHLL. Heme b-binding residues include H84 and H98. Positions 183 and 197 each coordinate heme b. H202 contacts a ubiquinone. 4 consecutive transmembrane segments (helical) span residues 227–247, 289–309, 321–341, and 348–368; these read FKDI…VLIS, LGGV…PFYN, INQV…WIGA, and YVLI…VNPL.

It belongs to the cytochrome b family. As to quaternary structure, the main subunits of complex b-c1 are: cytochrome b, cytochrome c1 and the Rieske protein. It depends on heme b as a cofactor.

Its subcellular location is the mitochondrion inner membrane. Its function is as follows. Component of the ubiquinol-cytochrome c reductase complex (complex III or cytochrome b-c1 complex) that is part of the mitochondrial respiratory chain. The b-c1 complex mediates electron transfer from ubiquinol to cytochrome c. Contributes to the generation of a proton gradient across the mitochondrial membrane that is then used for ATP synthesis. The chain is Cytochrome b (mt:Cyt-b) from Drosophila sechellia (Fruit fly).